We begin with the raw amino-acid sequence, 542 residues long: Protein MGF 505-11L (542 aa).

The protein belongs to the asfivirus MGF 505 family.

In terms of biological role, plays a role in virus cell tropism, and may be required for efficient virus replication in macrophages. This Ornithodoros (relapsing fever ticks) protein is Protein MGF 505-11L.